Reading from the N-terminus, the 147-residue chain is MVHLTGDEKAAVTALWGKVNVDEVGGEALGRLLVVYPWTQRFFESFGDLSTPDAVMHNPKVKAHGKKVLGAFSDGLAHLDNLKGTFAQLSELHCDKLHVDPENFRLLGNVLVCVLAQHFGKEFTPQVQAAYQKVVAGVANALAHKYH.

At valine 2 the chain carries N-acetylvaline. One can recognise a Globin domain in the interval 3–147; that stretch reads HLTGDEKAAV…VANALAHKYH (145 aa). The residue at position 13 (threonine 13) is a Phosphothreonine. The residue at position 45 (serine 45) is a Phosphoserine. Lysine 60 carries the N6-acetyllysine modification. Residue histidine 64 coordinates heme b. Residue lysine 83 is modified to N6-acetyllysine. Histidine 93 serves as a coordination point for heme b. An S-nitrosocysteine modification is found at cysteine 94. An N6-acetyllysine modification is found at lysine 145.

Belongs to the globin family. In terms of assembly, heterotetramer of two alpha chains and two beta chains. Red blood cells.

In terms of biological role, involved in oxygen transport from the lung to the various peripheral tissues. The polypeptide is Hemoglobin subunit beta (HBB) (Alouatta belzebul (Red-handed howler monkey)).